The sequence spans 437 residues: uncharacterized protein (437 aa).

Ser-290 and Ser-293 each carry phosphoserine. Phosphothreonine is present on Thr-296. Residues Ser-418 and Ser-428 each carry the phosphoserine modification.

This is an uncharacterized protein from Schizosaccharomyces pombe (strain 972 / ATCC 24843) (Fission yeast).